A 223-amino-acid polypeptide reads, in one-letter code: Endonuclease V (223 aa).

Residues Asp-35 and Asp-103 each contribute to the Mg(2+) site.

This sequence belongs to the endonuclease V family. The cofactor is Mg(2+).

The protein localises to the cytoplasm. The catalysed reaction is Endonucleolytic cleavage at apurinic or apyrimidinic sites to products with a 5'-phosphate.. In terms of biological role, DNA repair enzyme involved in the repair of deaminated bases. Selectively cleaves double-stranded DNA at the second phosphodiester bond 3' to a deoxyinosine leaving behind the intact lesion on the nicked DNA. The polypeptide is Endonuclease V (Escherichia coli O139:H28 (strain E24377A / ETEC)).